Reading from the N-terminus, the 183-residue chain is Hypoxanthine/guanine phosphoribosyltransferase (183 aa).

This sequence belongs to the purine/pyrimidine phosphoribosyltransferase family. Archaeal HPRT subfamily. Homodimer.

It localises to the cytoplasm. It carries out the reaction IMP + diphosphate = hypoxanthine + 5-phospho-alpha-D-ribose 1-diphosphate. It catalyses the reaction GMP + diphosphate = guanine + 5-phospho-alpha-D-ribose 1-diphosphate. The protein operates within purine metabolism; IMP biosynthesis via salvage pathway; IMP from hypoxanthine: step 1/1. Functionally, catalyzes a salvage reaction resulting in the formation of IMP that is energically less costly than de novo synthesis. This is Hypoxanthine/guanine phosphoribosyltransferase from Methanocaldococcus infernus (strain DSM 11812 / JCM 15783 / ME).